The following is a 407-amino-acid chain: Proteasome-activating nucleotidase (407 aa).

A coiled-coil region spans residues 22–67 (KEKAYLAELESKVLRLELKNKDITRENVQIKKENEILKRELDKLRI). ATP-binding positions include 192–197 (GTGKTL) and histidine 331. Residues 405–407 (MYG) form a docks into pockets in the proteasome alpha-ring to cause gate opening region.

Belongs to the AAA ATPase family. As to quaternary structure, homohexamer. The hexameric complex has a two-ring architecture resembling a top hat that caps the 20S proteasome core at one or both ends. Upon ATP-binding, the C-terminus of PAN interacts with the alpha-rings of the proteasome core by binding to the intersubunit pockets.

It is found in the cytoplasm. In terms of biological role, ATPase which is responsible for recognizing, binding, unfolding and translocation of substrate proteins into the archaeal 20S proteasome core particle. Is essential for opening the gate of the 20S proteasome via an interaction with its C-terminus, thereby allowing substrate entry and access to the site of proteolysis. Thus, the C-termini of the proteasomal ATPase function like a 'key in a lock' to induce gate opening and therefore regulate proteolysis. Unfolding activity requires energy from ATP hydrolysis, whereas ATP binding alone promotes ATPase-20S proteasome association which triggers gate opening, and supports translocation of unfolded substrates. This is Proteasome-activating nucleotidase from Methanococcus vannielii (strain ATCC 35089 / DSM 1224 / JCM 13029 / OCM 148 / SB).